We begin with the raw amino-acid sequence, 80 residues long: Acyl carrier protein (80 aa).

The region spanning 4–79 (EAILEKVRSI…DAVKYIEEKQ (76 aa)) is the Carrier domain. Residue Ser39 is modified to O-(pantetheine 4'-phosphoryl)serine.

This sequence belongs to the acyl carrier protein (ACP) family. 4'-phosphopantetheine is transferred from CoA to a specific serine of apo-ACP by AcpS. This modification is essential for activity because fatty acids are bound in thioester linkage to the sulfhydryl of the prosthetic group.

It localises to the cytoplasm. It participates in lipid metabolism; fatty acid biosynthesis. In terms of biological role, carrier of the growing fatty acid chain in fatty acid biosynthesis. This is Acyl carrier protein from Prochlorococcus marinus (strain NATL1A).